Here is a 344-residue protein sequence, read N- to C-terminus: Arylacetonitrilase (344 aa).

Residues 5-290 enclose the CN hydrolase domain; sequence LRVAVTQAEP…EGIVYADLDL (286 aa). E45 acts as the Proton acceptor in catalysis. K126 is a catalytic residue. C167 acts as the Nucleophile in catalysis. The disordered stretch occupies residues 324 to 344; the sequence is VIPRDEEEPSRKANVVVPKQE.

It belongs to the carbon-nitrogen hydrolase superfamily. Nitrilase family.

The catalysed reaction is a nitrile + 2 H2O = a carboxylate + NH4(+). It carries out the reaction 4-chlorophenylacetonitrile + 2 H2O = 4-chlorophenylacetate + NH4(+). In terms of biological role, nitrilase that hydrolyzes preferentially phenylacetonitrile and (R,S)-mandelonitrile. Also acts on dinitriles like phenylenediacetonitriles (PDAs) 1,2-PDA, 1,3-PDA, and 1,4-PDA, and cyanophenyl acetonitriles (CPAs) 2-CPA and 4-CPA. In Macrophomina phaseolina (strain MS6) (Charcoal rot fungus), this protein is Arylacetonitrilase.